Reading from the N-terminus, the 254-residue chain is DNA repair protein RecO (254 aa).

Belongs to the RecO family.

Functionally, involved in DNA repair and RecF pathway recombination. This is DNA repair protein RecO from Gluconacetobacter diazotrophicus (strain ATCC 49037 / DSM 5601 / CCUG 37298 / CIP 103539 / LMG 7603 / PAl5).